The primary structure comprises 619 residues: Schlafen family member 12-like (619 aa).

A helical membrane pass occupies residues isoleucine 598–leucine 618.

This sequence belongs to the Schlafen family.

The protein localises to the membrane. The polypeptide is Schlafen family member 12-like (SLFN12L) (Pongo abelii (Sumatran orangutan)).